We begin with the raw amino-acid sequence, 115 residues long: NADH-ubiquinone oxidoreductase chain 3 (115 aa).

3 helical membrane-spanning segments follow: residues 3-23, 55-75, and 84-104; these read FVLILMTNTLLALLLMIITFW, FFLVAITFLLFDLEIALLLPL, and LPLMVMSSLLLITILALSLAY.

It belongs to the complex I subunit 3 family. As to quaternary structure, core subunit of respiratory chain NADH dehydrogenase (Complex I) which is composed of 45 different subunits. Interacts with TMEM186. Interacts with TMEM242.

The protein resides in the mitochondrion inner membrane. The enzyme catalyses a ubiquinone + NADH + 5 H(+)(in) = a ubiquinol + NAD(+) + 4 H(+)(out). Functionally, core subunit of the mitochondrial membrane respiratory chain NADH dehydrogenase (Complex I) which catalyzes electron transfer from NADH through the respiratory chain, using ubiquinone as an electron acceptor. Essential for the catalytic activity of complex I. This is NADH-ubiquinone oxidoreductase chain 3 from Pan paniscus (Pygmy chimpanzee).